The following is a 37-amino-acid chain: Cytochrome b6-f complex subunit 5 (37 aa).

Residues 5–25 (LLDGLVLGLVFATLGGLFYAA) form a helical membrane-spanning segment.

Belongs to the PetG family. As to quaternary structure, the 4 large subunits of the cytochrome b6-f complex are cytochrome b6, subunit IV (17 kDa polypeptide, PetD), cytochrome f and the Rieske protein, while the 4 small subunits are PetG, PetL, PetM and PetN. The complex functions as a dimer.

Its subcellular location is the cellular thylakoid membrane. Its function is as follows. Component of the cytochrome b6-f complex, which mediates electron transfer between photosystem II (PSII) and photosystem I (PSI), cyclic electron flow around PSI, and state transitions. PetG is required for either the stability or assembly of the cytochrome b6-f complex. The chain is Cytochrome b6-f complex subunit 5 from Mastigocladus laminosus (Fischerella sp.).